We begin with the raw amino-acid sequence, 486 residues long: Chromosomal replication initiator protein DnaA (486 aa).

The segment at 1 to 79 (MEKSKNIWSL…GYNNIVIVFT (79 aa)) is domain I, interacts with DnaA modulators. The segment at 79-141 (TNQPPKTHSN…EEEPTNFKNP (63 aa)) is domain II. The tract at residues 142 to 358 (FLKKRYTFEN…AAVTKLKAYI (217 aa)) is domain III, AAA+ region. ATP contacts are provided by Gly186, Gly188, Lys189, and Thr190. The domain IV, binds dsDNA stretch occupies residues 359-486 (DLDNIEIDIE…TELMNKIKKN (128 aa)).

This sequence belongs to the DnaA family. Oligomerizes as a right-handed, spiral filament on DNA at oriC.

It is found in the cytoplasm. Its function is as follows. Plays an essential role in the initiation and regulation of chromosomal replication. ATP-DnaA binds to the origin of replication (oriC) to initiate formation of the DNA replication initiation complex once per cell cycle. Binds the DnaA box (a 9 base pair repeat at the origin) and separates the double-stranded (ds)DNA. Forms a right-handed helical filament on oriC DNA; dsDNA binds to the exterior of the filament while single-stranded (ss)DNA is stabiized in the filament's interior. The ATP-DnaA-oriC complex binds and stabilizes one strand of the AT-rich DNA unwinding element (DUE), permitting loading of DNA polymerase. After initiation quickly degrades to an ADP-DnaA complex that is not apt for DNA replication. Binds acidic phospholipids. Functionally, binds to the bpuR promoter, possibly at 5'-TTTTTAAA-3'. The polypeptide is Chromosomal replication initiator protein DnaA (Borreliella burgdorferi (strain ATCC 35210 / DSM 4680 / CIP 102532 / B31) (Borrelia burgdorferi)).